A 1447-amino-acid chain; its full sequence is Bud site selection protein 4 (1447 aa).

Residues 1-16 (MHDAESTVDSLLKEID) show a composition bias toward basic and acidic residues. 2 disordered regions span residues 1-38 (MHDA…PHNW) and 57-76 (NTRS…KMST). The residue at position 10 (serine 10) is a Phosphoserine. Composition is skewed to polar residues over residues 22-32 (TKSNITQNGSE) and 59-76 (RSNA…KMST). Serine 78, serine 81, serine 91, serine 96, and serine 167 each carry phosphoserine. The interval 272–316 (NLPSKLLNTSNNSHSDSRSPTASVEDLNISTNLPGADSSQNNPVT) is disordered. Over residues 277 to 316 (LLNTSNNSHSDSRSPTASVEDLNISTNLPGADSSQNNPVT) the composition is skewed to polar residues. A Phosphothreonine modification is found at threonine 365. Serine 367 is modified (phosphoserine). The disordered stretch occupies residues 444-479 (HQESEHANEQPAIIPQKDSSEETFTELNNESEFQRN). Position 511 is a phosphoserine (serine 511). Residues 529–591 (KTSAEEHDLS…NEEPEHVPLL (63 aa)) form a disordered region. Polar residues predominate over residues 538–548 (SSSCEDQSVSE). A compositionally biased stretch (basic and acidic residues) spans 549–580 (ARNKDRIEEKEVETKDENIETEKDESEYHKVE). Serine 616 is modified (phosphoserine). Residues 648 to 664 (ANSQFSQQSSITTASTV) are compositionally biased toward polar residues. Residues 648–673 (ANSQFSQQSSITTASTVDSKKDNGST) form a disordered region. Positions 768-879 (EHENIPLSTH…SLWESSYELK (112 aa)) are interaction with IQG1. Phosphoserine occurs at positions 805 and 811. A PH domain is found at 1302-1413 (NIYKEGYLLQ…WYNKLQEVVE (112 aa)).

In terms of assembly, interacts with AXL1, AXL2, IQG1 and SEC3. In terms of processing, phosphorylated by CDC28.

Its subcellular location is the bud neck. Its function is as follows. Required for establishment of the axial budding pattern in haploid cells. Cooperates with other bud site selection proteins to recognize a spatial landmark during mitosis and they subsequently become a landmark for downstream polarity establishment factors that coordinate axial budding and cytokinesis. Involved in the septin organization at the bud neck. This is Bud site selection protein 4 (BUD4) from Saccharomyces cerevisiae (strain ATCC 204508 / S288c) (Baker's yeast).